A 632-amino-acid chain; its full sequence is Probable potassium transport system protein Kup (632 aa).

12 helical membrane-spanning segments follow: residues 19–39 (LVVG…LYSL), 59–79 (IISM…VMFV), 110–130 (LIMM…VITP), 146–166 (PGLS…LFFI), 178–198 (FGPI…IHLV), 221–241 (LQAF…EALY), 256–276 (WFVL…AMLL), 298–318 (MVLL…SGAF), 346–366 (IYMP…VLAF), 375–395 (AYGI…ALVM), 403–423 (PALV…FFAA), and 428–448 (IAEG…LLMT).

It belongs to the HAK/KUP transporter (TC 2.A.72) family.

The protein localises to the cell inner membrane. The enzyme catalyses K(+)(in) + H(+)(in) = K(+)(out) + H(+)(out). In terms of biological role, transport of potassium into the cell. Likely operates as a K(+):H(+) symporter. This Cupriavidus metallidurans (strain ATCC 43123 / DSM 2839 / NBRC 102507 / CH34) (Ralstonia metallidurans) protein is Probable potassium transport system protein Kup.